The sequence spans 215 residues: UPF0502 protein YceH (215 aa).

K80 is subject to N6-acetyllysine.

It belongs to the UPF0502 family.

In Escherichia fergusonii (strain ATCC 35469 / DSM 13698 / CCUG 18766 / IAM 14443 / JCM 21226 / LMG 7866 / NBRC 102419 / NCTC 12128 / CDC 0568-73), this protein is UPF0502 protein YceH.